A 233-amino-acid chain; its full sequence is Large ribosomal subunit protein uL1 (233 aa).

This sequence belongs to the universal ribosomal protein uL1 family. Part of the 50S ribosomal subunit.

In terms of biological role, binds directly to 23S rRNA. The L1 stalk is quite mobile in the ribosome, and is involved in E site tRNA release. Functionally, protein L1 is also a translational repressor protein, it controls the translation of the L11 operon by binding to its mRNA. The sequence is that of Large ribosomal subunit protein uL1 from Brucella anthropi (strain ATCC 49188 / DSM 6882 / CCUG 24695 / JCM 21032 / LMG 3331 / NBRC 15819 / NCTC 12168 / Alc 37) (Ochrobactrum anthropi).